The chain runs to 260 residues: Putative protein phosphatase (260 aa).

Residues 9–254 (FTGLSKKGPV…DNITAALVNL (246 aa)) form the PPM-type phosphatase domain.

The catalysed reaction is O-phospho-L-seryl-[protein] + H2O = L-seryl-[protein] + phosphate. It catalyses the reaction O-phospho-L-threonyl-[protein] + H2O = L-threonyl-[protein] + phosphate. In Mycoplasma genitalium (strain ATCC 33530 / DSM 19775 / NCTC 10195 / G37) (Mycoplasmoides genitalium), this protein is Putative protein phosphatase.